Here is a 145-residue protein sequence, read N- to C-terminus: Enhancer of mRNA-decapping protein 2 (145 aa).

2 disordered regions span residues 1-74 and 89-115; these read MGSE…DKAT and PKKK…IDSK. Over residues 29 to 42 the composition is skewed to polar residues; that stretch reads TKTQILVPPTQSLP. The segment covering 55 to 73 has biased composition (basic and acidic residues); that stretch reads QRREPRERTSKTGHEDDKA. Over residues 89 to 102 the composition is skewed to basic residues; the sequence is PKKKSCKYKKKKTR.

This sequence belongs to the EDC family.

It is found in the cytoplasm. Its subcellular location is the nucleus. MRNA-binding protein which stimulates mRNA decapping by DCP1 and DCP2. In Saccharomyces cerevisiae (strain ATCC 204508 / S288c) (Baker's yeast), this protein is Enhancer of mRNA-decapping protein 2 (EDC2).